Reading from the N-terminus, the 265-residue chain is Ubiquinone biosynthesis protein COQ4 homolog, mitochondrial (265 aa).

Residues 1-30 (MATLLRPVLRRLCGLPGLQRPAAEMPLRAR) constitute a mitochondrion transit peptide. Ser108 carries the phosphoserine modification. Residues His163, Asp164, His167, and Glu179 each coordinate Zn(2+).

The protein belongs to the COQ4 family. In terms of assembly, component of a multi-subunit COQ enzyme complex, composed of at least COQ3, COQ4, COQ5, COQ6, COQ7 and COQ9. Requires Zn(2+) as cofactor. As to expression, expressed ubiquitously, but at high levels in liver, lung and pancreas.

The protein localises to the mitochondrion inner membrane. It carries out the reaction 4-hydroxy-3-methoxy-5-(all-trans-decaprenyl)benzoate + H(+) = 2-methoxy-6-(all-trans-decaprenyl)phenol + CO2. Its pathway is cofactor biosynthesis; ubiquinone biosynthesis. Its function is as follows. Lyase that catalyzes the C1-decarboxylation of 4-hydroxy-3-methoxy-5-(all-trans-decaprenyl)benzoic acid into 2-methoxy-6-(all-trans-decaprenyl)phenol during ubiquinone biosynthesis. The protein is Ubiquinone biosynthesis protein COQ4 homolog, mitochondrial of Homo sapiens (Human).